Consider the following 311-residue polypeptide: Lipoyl synthase (311 aa).

The [4Fe-4S] cluster site is built by Cys55, Cys60, Cys66, Cys81, Cys85, Cys88, and Ser292. The region spanning 67–281 (WEDREATFLI…ARFAEGLGFA (215 aa)) is the Radical SAM core domain.

Belongs to the radical SAM superfamily. Lipoyl synthase family. The cofactor is [4Fe-4S] cluster.

Its subcellular location is the cytoplasm. It carries out the reaction [[Fe-S] cluster scaffold protein carrying a second [4Fe-4S](2+) cluster] + N(6)-octanoyl-L-lysyl-[protein] + 2 oxidized [2Fe-2S]-[ferredoxin] + 2 S-adenosyl-L-methionine + 4 H(+) = [[Fe-S] cluster scaffold protein] + N(6)-[(R)-dihydrolipoyl]-L-lysyl-[protein] + 4 Fe(3+) + 2 hydrogen sulfide + 2 5'-deoxyadenosine + 2 L-methionine + 2 reduced [2Fe-2S]-[ferredoxin]. It participates in protein modification; protein lipoylation via endogenous pathway; protein N(6)-(lipoyl)lysine from octanoyl-[acyl-carrier-protein]: step 2/2. In terms of biological role, catalyzes the radical-mediated insertion of two sulfur atoms into the C-6 and C-8 positions of the octanoyl moiety bound to the lipoyl domains of lipoate-dependent enzymes, thereby converting the octanoylated domains into lipoylated derivatives. The chain is Lipoyl synthase from Mycobacterium bovis (strain ATCC BAA-935 / AF2122/97).